A 443-amino-acid polypeptide reads, in one-letter code: Phosphoglucosamine mutase (443 aa).

Catalysis depends on Ser-101, which acts as the Phosphoserine intermediate. Mg(2+) contacts are provided by Ser-101, Asp-239, Asp-241, and Asp-243. Ser-101 is subject to Phosphoserine.

This sequence belongs to the phosphohexose mutase family. The cofactor is Mg(2+). Activated by phosphorylation.

It catalyses the reaction alpha-D-glucosamine 1-phosphate = D-glucosamine 6-phosphate. Functionally, catalyzes the conversion of glucosamine-6-phosphate to glucosamine-1-phosphate. In Francisella philomiragia subsp. philomiragia (strain ATCC 25017 / CCUG 19701 / FSC 153 / O#319-036), this protein is Phosphoglucosamine mutase.